The sequence spans 248 residues: Tyrosine recombinase XerD-like (248 aa).

Residues 1-72 (MKSYIEPFIA…TANQFLYYLY (72 aa)) form the Core-binding (CB) domain. A Tyr recombinase domain is found at 85-248 (DTMKVMRTEK…PVTLEKYYKS (164 aa)). Active-site residues include Lys-149 and Arg-213. Tyr-245 functions as the O-(3'-phospho-DNA)-tyrosine intermediate in the catalytic mechanism.

The protein belongs to the 'phage' integrase family. XerD-like subfamily.

It localises to the cytoplasm. Functionally, putative tyrosine recombinase. Not involved in the cutting and rejoining of the recombining DNA molecules on dif(SL) site. This is Tyrosine recombinase XerD-like from Streptococcus pyogenes serotype M28 (strain MGAS6180).